The following is a 122-amino-acid chain: Large ribosomal subunit protein uL18 (122 aa).

It belongs to the universal ribosomal protein uL18 family. Part of the 50S ribosomal subunit; part of the 5S rRNA/L5/L18/L25 subcomplex. Contacts the 5S and 23S rRNAs.

In terms of biological role, this is one of the proteins that bind and probably mediate the attachment of the 5S RNA into the large ribosomal subunit, where it forms part of the central protuberance. The polypeptide is Large ribosomal subunit protein uL18 (Dictyoglomus thermophilum (strain ATCC 35947 / DSM 3960 / H-6-12)).